The following is a 424-amino-acid chain: tRNA(Ile)-lysidine synthase (424 aa).

Position 26–31 (26–31 (SGGIDS)) interacts with ATP.

Belongs to the tRNA(Ile)-lysidine synthase family.

It localises to the cytoplasm. It catalyses the reaction cytidine(34) in tRNA(Ile2) + L-lysine + ATP = lysidine(34) in tRNA(Ile2) + AMP + diphosphate + H(+). Functionally, ligates lysine onto the cytidine present at position 34 of the AUA codon-specific tRNA(Ile) that contains the anticodon CAU, in an ATP-dependent manner. Cytidine is converted to lysidine, thus changing the amino acid specificity of the tRNA from methionine to isoleucine. The protein is tRNA(Ile)-lysidine synthase of Streptococcus agalactiae serotype V (strain ATCC BAA-611 / 2603 V/R).